The following is a 266-amino-acid chain: Protein-ADP-ribose hydrolase (266 aa).

The Macro domain occupies 74-265 (TDLKDLKPIK…LYKEAFNRDA (192 aa)). 3 residues coordinate ADP-D-ribose: aspartate 93, isoleucine 94, and asparagine 107. Zn(2+)-binding residues include cysteine 113, histidine 118, and cysteine 120. Residues cysteine 120, isoleucine 121, aspartate 122, serine 212, threonine 213, glycine 214, and phenylalanine 216 each coordinate ADP-D-ribose.

Belongs to the MacroD-type family. Zn-Macro subfamily. It depends on Zn(2+) as a cofactor.

The enzyme catalyses 4-O-(ADP-D-ribosyl)-L-aspartyl-[protein] + H2O = L-aspartyl-[protein] + ADP-D-ribose + H(+). Its function is as follows. ADP-ribosylhydrolase that specifically reverses the SirTM-mediated mono-ADP-ribosylation at an asparatate residue of GcvH-L, by releasing ADP-ribose from the target protein. May play a role in the regulation of the response to host-induced oxidative stress. This Staphylococcus aureus (strain MRSA252) protein is Protein-ADP-ribose hydrolase.